Consider the following 80-residue polypeptide: MKKPLRQQNRQIISYVPRTEPAPPEHAIKMDSFRDVWMLRGKYVAFVLMGESFLRSPAFTVPESAQRWANQIRQEGEVTE.

It belongs to the CedA family.

Activates the cell division inhibited by chromosomal DNA over-replication. In Escherichia coli O139:H28 (strain E24377A / ETEC), this protein is Cell division activator CedA.